A 177-amino-acid chain; its full sequence is Inorganic pyrophosphatase (177 aa).

3 residues coordinate substrate: lysine 31, arginine 45, and tyrosine 57. Mg(2+) contacts are provided by aspartate 67, aspartate 72, and aspartate 104. Residue tyrosine 142 coordinates substrate.

Belongs to the PPase family. Homohexamer. The cofactor is Mg(2+).

It localises to the cytoplasm. It catalyses the reaction diphosphate + H2O = 2 phosphate + H(+). In terms of biological role, catalyzes the hydrolysis of inorganic pyrophosphate (PPi) forming two phosphate ions. In Neisseria meningitidis serogroup A / serotype 4A (strain DSM 15465 / Z2491), this protein is Inorganic pyrophosphatase.